Here is a 368-residue protein sequence, read N- to C-terminus: MVHKSPPSRRACRKYGGVFDVAAYEARIATLEAAAAAPDFWSERARAEALLAELKTLRATLEPWRALRRESADLRALYELAREAQDASLEPELSSLFSDISARFEEASLTRLLHEEVDRLDAFVTIHSGAGGVEACDWAQMLMRMYTRWAERRSFCVHIVDLLESEGGVKSVTLKICGSHAFGFLKGETGVHRLVRISPFDSAARRHTSFTSTYVFPVLDDHVEVHIRSEDMRVDTYRSGGAGGQHVNKTDSAVRITHLPTGIVVTCQNERSQISNRATALSLLRARLYAYERQKKQQEHQRFASEKKDISWGNQIRSYVFHPYTMVKDHRSKCETGNIHAVMDGALEPFIRSYLEFLCTSTQCVEPQ.

At Gln-245 the chain carries N5-methylglutamine.

It belongs to the prokaryotic/mitochondrial release factor family. Methylated by PrmC. Methylation increases the termination efficiency of RF2.

It localises to the cytoplasm. In terms of biological role, peptide chain release factor 2 directs the termination of translation in response to the peptide chain termination codons UGA and UAA. The polypeptide is Peptide chain release factor 2 (prfB) (Treponema pallidum (strain Nichols)).